Here is a 396-residue protein sequence, read N- to C-terminus: MQKLVILGSTGSIGKSTLSVVDNNPEQYQVFALVGGKNVELITEQCQQYQPRFVALDDEQAAAKLKENLTALGLKIEVLAGQKAIYELASHPEVDMVMAAIVGAAGLLPTLSAVQAGKKVLLANKESLVTCGQIFIDEARKSGAKLLPVDSEHNAIFQSLPPEAQEKVGFCPLAELGVSKIILTGSGGPFCTKPLNEFSQITPAQAVAHPNWSMGKKISVDSATMMNKGLEYIEARWLFNASADEMEIIIHPQSIIHSMVRYIDGSVIAQMGNPDMRTPIAHTMAYPNRIYAGVAPLDFFKLKELTFIEPDFARYPNLKLAIEAFAEGQYATTAMNAANEIAVEAFLNDQIRFTDIVEVNRQVVENIAPVQVKEIADVLHIDKLAREVAKQHILQF.

The NADPH site is built by T10, G11, S12, I13, G36, K37, N38, and N124. 1-deoxy-D-xylulose 5-phosphate is bound at residue K125. E126 contacts NADPH. D150 contacts Mn(2+). 1-deoxy-D-xylulose 5-phosphate contacts are provided by S151, E152, S186, and H209. Mn(2+) is bound at residue E152. G215 contributes to the NADPH binding site. 1-deoxy-D-xylulose 5-phosphate is bound by residues S222, N227, K228, and E231. E231 contacts Mn(2+).

Belongs to the DXR family. Mg(2+) serves as cofactor. It depends on Mn(2+) as a cofactor.

The enzyme catalyses 2-C-methyl-D-erythritol 4-phosphate + NADP(+) = 1-deoxy-D-xylulose 5-phosphate + NADPH + H(+). It participates in isoprenoid biosynthesis; isopentenyl diphosphate biosynthesis via DXP pathway; isopentenyl diphosphate from 1-deoxy-D-xylulose 5-phosphate: step 1/6. Functionally, catalyzes the NADPH-dependent rearrangement and reduction of 1-deoxy-D-xylulose-5-phosphate (DXP) to 2-C-methyl-D-erythritol 4-phosphate (MEP). In Glaesserella parasuis serovar 5 (strain SH0165) (Haemophilus parasuis), this protein is 1-deoxy-D-xylulose 5-phosphate reductoisomerase.